A 770-amino-acid polypeptide reads, in one-letter code: MGDYTAEFTPDEQALIDAEFARLSDSTYLDHAGTTLYAHNQVSDAAQQLQRDVICNPHTCRVTGDYVDQVRYKILEFFNTNADEYHVVFTANASAALRLVADHFDFGTNGNFHYCQENHTSVLGMRQLVSANRIYMLTKDQILLNNGTPAGATAAAATAHSDNSLVVFSAQCNFSGYKMPLTVIEKIQQDGLREPGKCIDCKLQSDPGQSNYYVCLDAASYAASSPLDLRRHRPDYVCLSFYKIFGYPTGVGALLVSKRGAELLKKRFYGGGTVNFAYPHTMEHQLRSTFHERFEDGTLPFLSIVELLQGFQTLQRLVPGRSMERISRHVHSLARYCEQQLLQMQYPNGAPLVTLYNHAGYEDRMQQGGIVAFNVRTAAGDYVGFGEIASVAALHRILLRTGCFCNVGACQHFMNLNGDAMDAIYKLAGRICGDYYDLLDGRPTGAVRVSFGYMTRLQDVDRLLQMLRDSYLSVKWHQRLDFIEQRVQQLPKLLQQRAQQLRPQLLQLAIYPVKSCAALKMPASALTDQGLQYDREWMIVDLNGMALTQKRCTDLCLIQPRIVADQLQLHFNGDGSTTFVSVPLSLTDQATNSARCQSKVCRQSVEGYDCGDEVANWLCQQLGLDGLRLLRQSAQRRAPGDRQQLSLVNQAQFLLVNRASVRSLGFEEPLDETVDRFRSNIVIDTGVPFEELEFGQLRIGEVLFQVEGPCQRCDMICINQRTGQRSPDTLTTIARIQSGKMRFGIYISRLPNENRMQPQLACGDPITVLR.

Lys-243 carries the post-translational modification N6-(pyridoxal phosphate)lysine. Cys-405 is a catalytic residue. In terms of domain architecture, MOSC spans 611–769; the sequence is GDEVANWLCQ…LACGDPITVL (159 aa). Residue Ser-726 is modified to Phosphoserine.

It belongs to the class-V pyridoxal-phosphate-dependent aminotransferase family. MOCOS subfamily. It depends on pyridoxal 5'-phosphate as a cofactor.

It catalyses the reaction Mo-molybdopterin + L-cysteine + AH2 = thio-Mo-molybdopterin + L-alanine + A + H2O. The protein operates within cofactor biosynthesis; molybdopterin biosynthesis. In terms of biological role, sulfurates the molybdenum cofactor. Sulfation of molybdenum is essential for xanthine dehydrogenase (XDH) and aldehyde oxidase (ADO) enzymes in which molybdenum cofactor is liganded by 1 oxygen and 1 sulfur atom in active form. In Drosophila grimshawi (Hawaiian fruit fly), this protein is Molybdenum cofactor sulfurase.